Consider the following 347-residue polypeptide: Heat-inducible transcription repressor HrcA (347 aa).

The protein belongs to the HrcA family.

Its function is as follows. Negative regulator of class I heat shock genes (grpE-dnaK-dnaJ and groELS operons). Prevents heat-shock induction of these operons. The chain is Heat-inducible transcription repressor HrcA from Rhodococcus erythropolis (strain PR4 / NBRC 100887).